The following is a 202-amino-acid chain: Syndecan-2 (202 aa).

Positions 1–18 are cleaved as a signal peptide; it reads MQRAWILLTLGLMACVSA. Residues 19-145 are Extracellular-facing; the sequence is ETRTELTSDK…HSDNLFKRTE (127 aa). Residues serine 41, serine 55, and serine 57 are each glycosylated (O-linked (Xyl...) (glycosaminoglycan) serine). Disordered stretches follow at residues 41–63 and 88–118; these read SGVY…DEDI and ETMT…ISEA. Positions 91-103 are enriched in polar residues; that stretch reads TLKTQSITPAQTE. Positions 104 to 117 are enriched in acidic residues; sequence SPEETDKEEVDISE. Phosphoserine is present on serine 116. A helical membrane pass occupies residues 146–170; that stretch reads VLAAVIAGGVIGFLFAIFLILLLVY. Residues 171–202 are Cytoplasmic-facing; the sequence is RMRKKDEGSYDLGERKPSSAAYQKAPTKEFYA. The segment at 179–202 is disordered; it reads SYDLGERKPSSAAYQKAPTKEFYA. Serine 188 is subject to Phosphoserine.

This sequence belongs to the syndecan proteoglycan family. Interacts (via cytoplasmic domain) with SARM1. Forms a complex with SDCBP and PDCD6IP. In terms of processing, O-glycosylated; contains both heparan sulfate and chondroitin sulfate. Phosphorylated on serine residues. As to expression, preferential expression in cells of mesenchymal origin.

The protein localises to the membrane. Cell surface proteoglycan which regulates dendritic arbor morphogenesis. The polypeptide is Syndecan-2 (Sdc2) (Mus musculus (Mouse)).